Reading from the N-terminus, the 514-residue chain is Ankyrin repeat domain-containing protein 34B (514 aa).

ANK repeat units follow at residues 9–38, 42–79, 83–113, and 117–146; these read SEGN…YINE, RGET…DPNI, SGKT…DLSL, and SSYS…AKGK. The tract at residues 220-249 is disordered; sequence NDDTWDPGSPVRKPALAPKGPKLPHAPPWV. Ser263 carries the post-translational modification Phosphoserine. Position 272 is a phosphothreonine (Thr272). Residue Ser296 is modified to Phosphoserine.

Belongs to the ANKRD34 family. Post-translationally, phosphorylated.

The protein resides in the cytoplasm. Its subcellular location is the nucleus. This is Ankyrin repeat domain-containing protein 34B (ANKRD34B) from Homo sapiens (Human).